A 2303-amino-acid chain; its full sequence is Genome polyprotein (2303 aa).

A zinc finger spans residues 3-14; the sequence is CKHGYPDVCPIC. The acidic stretch occupies residues 30 to 46; it reads DGEWYPTDLLCVDLDDD. The segment at 60 to 73 is theilo; sequence MDWTDVPLIRDIVM. The disordered stretch occupies residues 74 to 93; the sequence is EPQGNSSSSDKSNSQSSGNE. Residue glycine 77 is the site of N-myristoyl glycine; by host attachment. The segment covering 78 to 92 has biased composition (low complexity); it reads NSSSSDKSNSQSSGN. Cysteine 501 and cysteine 503 are joined by a disulfide. The segment at 1041–1047 is host EIF4E binding; that stretch reads YYRQRLI. Positions 1283-1448 constitute an SF3 helicase domain; it reads IPLASLCEKF…CKTPAGMLDV (166 aa). Residue 1312–1319 participates in ATP binding; sequence GAAGQGKS. At tyrosine 1608 the chain carries O-(5'-phospho-RNA)-tyrosine. A Peptidase C3 domain is found at 1636–1829; sequence NPVMDFELFC…AATIITKELI (194 aa). Active-site for protease 3C activity residues include histidine 1680, aspartate 1714, and cysteine 1793. A RdRp catalytic domain is found at 2071-2189; it reads NYVYDVDYSN…GTNYQIDFNL (119 aa). Catalysis depends on for RdRp activity residues aspartate 2077 and aspartate 2175.

This sequence belongs to the picornaviruses polyprotein family. Interacts with host EIF4E. Interacts with the leader protein. In terms of assembly, interacts with host RAN; the complex L-RAN recruits cellular kinases responsible for the L-induced nucleocytoplasmic trafficking inhibition. The complex L-RAN can further bind to the host exportins XPO1/CRM1 and CSE1L/CAS. Interacts with the protein 2A. Interacts with host RNASEL; this interaction prevents RNASEL activation by its substrate 2'-5' oligoadenylates. Phosphorylated. In terms of processing, specific enzymatic cleavages by the viral protease in vivo yield a variety of precursors and mature proteins. The polyprotein seems to be cotranslationally cleaved at the 2A/2B junction by a ribosomal skip from one codon to the next without formation of a peptide bond. This process would release the P1-2A peptide from the translational complex. Post-translationally, during virion maturation, immature virions are rendered infectious following cleavage of VP0 into VP4 and VP2. This maturation seems to be an autocatalytic event triggered by the presence of RNA in the capsid and is followed by a conformational change of the particle. Uridylylated by the polymerase and is covalently linked to the 5'-end of genomic RNA. This uridylylated form acts as a nucleotide-peptide primer for the polymerase. In terms of processing, myristoylation is required during RNA encapsidation and formation of the mature virus particle.

Its subcellular location is the virion. It is found in the host cytoplasm. It localises to the host nucleus. The protein localises to the host nucleolus. The protein resides in the host cytoplasmic vesicle membrane. It carries out the reaction RNA(n) + a ribonucleoside 5'-triphosphate = RNA(n+1) + diphosphate. The enzyme catalyses ATP + H2O = ADP + phosphate + H(+). It catalyses the reaction Selective cleavage of Gln-|-Gly bond in the poliovirus polyprotein. In other picornavirus reactions Glu may be substituted for Gln, and Ser or Thr for Gly.. Forms a complex with host RAN and probably binds to exportins carrying activated MAPK in order to mediate the hyperphosphorylation of host Phe/Gly containing nuclear pore proteins (Nups) resulting in cessation of active nucleocytoplasmic transport. Proteins with NLS signals fail to import, cellular mRNAs fail to export, and some proteins small enough for diffusion are not retained anymore (efflux). The resulting inhibition of cellular protein synthesis serves to ensure maximal viral gene expression and to evade host immune response. The leader protein also inhibits host interferon regulatory factor 3 (IRF3) dimerization, thereby blocking the transcriptional activation of IFN genes. Binds to host RNase L thereby preventing its activation by 2'-5' oligoadenylates in order to counteract the antiviral interferon-inducible OAS/RNase L pathway. Inhibits the integrated stress response (ISR) in the infected cell. Inhibits the host EIF2AK2/PKR by rendering this kinase unable to detect double-stranded RNA. Also impairs host stress granule formation probably by acting on a step downstream of EIF2AK2/PKR activation. Its function is as follows. Forms an icosahedral capsid of pseudo T=3 symmetry with capsid proteins VP2 and VP3. Together they form an icosahedral capsid composed of 60 copies of each VP1, VP2, and VP3, with a diameter of approximately 300 Angstroms. VP4 lies on the inner surface of the protein shell formed by VP1, VP2 and VP3. All the three latter proteins contain a beta-sheet structure called beta-barrel jelly roll. VP1 is situated at the 12 fivefold axes, whereas VP2 and VP3 are located at the quasi-sixfold axes. In terms of biological role, lies on the inner surface of the capsid shell. After binding to the host receptor, the capsid undergoes conformational changes. Capsid protein VP4 is released, capsid protein VP1 N-terminus is externalized, and together, they shape a pore in the host membrane through which the viral genome is translocated into the host cell cytoplasm. After genome has been released, the channel shrinks. Functionally, VP0 precursor is a component of immature procapsids. Involved in host translation shutoff by inhibiting cap-dependent mRNA translation. Nuclear localization is required for this function. The resulting inhibition of cellular protein synthesis serves to ensure maximal viral gene expression and to evade host immune response. Inhibits the phosphorylation of the leader protein. Its function is as follows. Affects membrane integrity and causes an increase in membrane permeability. In terms of biological role, associates with and induces structural rearrangements of intracellular membranes. It displays RNA-binding, nucleotide binding and NTPase activities. Functionally, serves as membrane anchor via its hydrophobic domain. Forms a primer, VPg-pU, which is utilized by the polymerase for the initiation of RNA chains. Its function is as follows. Cysteine protease that generates mature viral proteins from the precursor polyprotein. In addition to its proteolytic activity, it binds to viral RNA, and thus influences viral genome replication. RNA and substrate cooperatively bind to the protease. Cleaves host PABP1, this cleavage is important for viral replication. In terms of biological role, replicates the genomic and antigenomic RNAs by recognizing replications specific signals. Performs VPg uridylylation. The sequence is that of Genome polyprotein from Mus musculus (Mouse).